A 91-amino-acid chain; its full sequence is MGYPESISSISNSTGSMGSSISASNLNGFASNDNSISCFDGGCGGGLGGWGGLRGWGGIGGFNGGCEGCGSSNTNIINLDIDIGRSHRRCC.

It belongs to the UPF0512 family.

The protein is UPF0512 protein M of Dictyostelium discoideum (Social amoeba).